Reading from the N-terminus, the 1388-residue chain is Rho-associated protein kinase 2 (1388 aa).

The interval 1–27 (MSRPPPTGKMPGAPETAPGDGAGASRQ) is disordered. A Protein kinase domain is found at 92–354 (YDVVKVIGRG…VEEIRQHPFF (263 aa)). Residues 98 to 106 (IGRGAFGEV) and Lys121 contribute to the ATP site. The active-site Proton acceptor is Asp214. One can recognise an AGC-kinase C-terminal domain in the interval 357 to 425 (DQWHWDNIRE…YRENLLLSDS (69 aa)). Positions 363-784 (NIRETAAPVV…INELLKQKDV (422 aa)) are interaction with PPP1R12A. The segment at 373-420 (PELSSDIDSSNFDDIEDDKGDVETFPIPKAFVGNQLPFIGFTYYRENL) is interaction with NPM1. The residue at position 414 (Thr414) is a Phosphothreonine; by ROCK2. Coiled-coil stretches lie at residues 429-1024 (RETD…EKQL) and 1053-1131 (DTDV…IGLD). The REM-1 domain maps to 497–573 (ALRQLEREKA…LDETNALLRT (77 aa)). Residue Tyr722 is modified to Phosphotyrosine; by SRC. The 69-residue stretch at 979-1047 (TSDVANLANE…LAEIMNRKEP (69 aa)) folds into the RhoBD domain. The RHOA binding stretch occupies residues 979-1047 (TSDVANLANE…LAEIMNRKEP (69 aa)). Ser1137 carries the post-translational modification Phosphoserine. Positions 1150-1349 (ESRLEGWLSL…WVSRLVKKIP (200 aa)) constitute a PH domain. Thr1212 is subject to Phosphothreonine. The segment at 1260-1315 (GHEFIPTLYHFPTNCEACMKPLWHMFKPPPALECRRCHIKCHKDHMDKKEEIIAPC) adopts a Phorbol-ester/DAG-type zinc-finger fold. The disordered stretch occupies residues 1345–1388 (VKKIPKKPPAPDPFARSSPRTSMKIQQNQSIRRPSRQLAPNKPS). 2 positions are modified to phosphoserine: Ser1362 and Ser1374. Over residues 1362-1376 (SPRTSMKIQQNQSIR) the composition is skewed to polar residues.

It belongs to the protein kinase superfamily. AGC Ser/Thr protein kinase family. As to quaternary structure, homodimer. Interacts with IRS1. Interacts with RAF1. Interacts with RHOA (activated by GTP), RHOB and RHOC. Interacts with PPP1R12A. Interacts with EP300. Interacts with CHORDC1. Interacts with BRCA2. Interacts with NPM1; this interaction enhances ROCK2 activity. Interacts with SORL1. Interacts with PJVK. Requires Mg(2+) as cofactor. In terms of processing, phosphorylation at Tyr-722 reduces its binding to RHOA and is crucial for focal adhesion dynamics. Dephosphorylation by PTPN11 stimulates its RHOA binding activity. Post-translationally, cleaved by granzyme B during apoptosis. This leads to constitutive activation of the kinase and membrane blebbing. Expressed in the brain (at protein level).

The protein localises to the cytoplasm. It is found in the cell membrane. Its subcellular location is the nucleus. The protein resides in the cytoskeleton. It localises to the microtubule organizing center. The protein localises to the centrosome. The catalysed reaction is L-seryl-[protein] + ATP = O-phospho-L-seryl-[protein] + ADP + H(+). It carries out the reaction L-threonyl-[protein] + ATP = O-phospho-L-threonyl-[protein] + ADP + H(+). With respect to regulation, activated by RHOA binding. Inhibited by Y-27632. Functionally, protein kinase which is a key regulator of actin cytoskeleton and cell polarity. Involved in regulation of smooth muscle contraction, actin cytoskeleton organization, stress fiber and focal adhesion formation, neurite retraction, cell adhesion and motility via phosphorylation of ADD1, BRCA2, CNN1, EZR, DPYSL2, EP300, MSN, MYL9/MLC2, NPM1, RDX, PPP1R12A and VIM. Phosphorylates SORL1 and IRF4. Acts as a negative regulator of VEGF-induced angiogenic endothelial cell activation. Positively regulates the activation of p42/MAPK1-p44/MAPK3 and of p90RSK/RPS6KA1 during myogenic differentiation. Plays an important role in the timely initiation of centrosome duplication. Inhibits keratinocyte terminal differentiation. May regulate closure of the eyelids and ventral body wall through organization of actomyosin bundles. Plays a critical role in the regulation of spine and synaptic properties in the hippocampus. Plays an important role in generating the circadian rhythm of the aortic myofilament Ca(2+) sensitivity and vascular contractility by modulating the myosin light chain phosphorylation. The protein is Rho-associated protein kinase 2 (ROCK2) of Homo sapiens (Human).